The primary structure comprises 200 residues: Large ribosomal subunit protein uL4 (200 aa).

A disordered region spans residues 43-71 (RAQKTRAEVSGSGKKPWRQKGTGRARSGD).

The protein belongs to the universal ribosomal protein uL4 family. Part of the 50S ribosomal subunit.

Functionally, one of the primary rRNA binding proteins, this protein initially binds near the 5'-end of the 23S rRNA. It is important during the early stages of 50S assembly. It makes multiple contacts with different domains of the 23S rRNA in the assembled 50S subunit and ribosome. Its function is as follows. Forms part of the polypeptide exit tunnel. This chain is Large ribosomal subunit protein uL4, found in Pasteurella multocida (strain Pm70).